Here is a 2273-residue protein sequence, read N- to C-terminus: Acetyl-CoA carboxylase, mitochondrial (2273 aa).

The transit peptide at 1–104 (KGKTITHGQS…RGNIHKHTRL (104 aa)) directs the protein to the mitochondrion. The 502-residue stretch at 134-635 (VISKILIANN…STGWLDDLIL (502 aa)) folds into the Biotin carboxylation domain. The ATP-grasp domain occupies 292–484 (KTNFVSVPDD…LPATQLQIAM (193 aa)). 332 to 337 (GGGGKG) serves as a coordination point for ATP. Residue Arg-459 is part of the active site. Positions 763-837 (LEAELNPTQV…EAGDVIAKLT (75 aa)) constitute a Biotinyl-binding domain. Lys-804 carries the N6-biotinyllysine modification. The CoA carboxyltransferase N-terminal domain occupies 1532 to 1867 (PYSVKDWLQP…KRDMSPPLLE (336 aa)). Residues 1532 to 2187 (PYSVKDWLQP…EGQVIKRLQK (656 aa)) are carboxyltransferase. Arg-1776, Lys-2080, and Arg-2082 together coordinate CoA. The CoA carboxyltransferase C-terminal domain occupies 1871 to 2187 (RWDRDVDFKP…EGQVIKRLQK (317 aa)).

Requires biotin as cofactor.

The protein resides in the mitochondrion. The enzyme catalyses hydrogencarbonate + acetyl-CoA + ATP = malonyl-CoA + ADP + phosphate + H(+). It carries out the reaction N(6)-biotinyl-L-lysyl-[protein] + hydrogencarbonate + ATP = N(6)-carboxybiotinyl-L-lysyl-[protein] + ADP + phosphate + H(+). The protein operates within lipid metabolism; malonyl-CoA biosynthesis; malonyl-CoA from acetyl-CoA: step 1/1. In terms of biological role, catalyzes the rate-limiting reaction in the mitochondrial fatty acid synthesis (FAS) type II pathway. Responsible for the production of the mitochondrial malonyl-CoA, used for the biosynthesis of the cofactor lipoic acid. This protein carries three functions: biotin carboxyl carrier protein, biotin carboxylase, and carboxyltransferase. This chain is Acetyl-CoA carboxylase, mitochondrial (HFA1), found in Saccharomyces cerevisiae (strain YJM789) (Baker's yeast).